The following is a 348-amino-acid chain: NADH-quinone oxidoreductase subunit H 1 (348 aa).

8 helical membrane passes run 11–31 (IYYI…LLTV), 83–103 (FAFL…FAVI), 136–156 (VGVL…VLAG), 172–192 (SAQM…VFML), 208–228 (GAWY…CSLA), 268–288 (MVTV…GPAF), 289–309 (LPGW…CMWI), and 324–344 (LGWK…GIVV).

It belongs to the complex I subunit 1 family. As to quaternary structure, NDH-1 is composed of 14 different subunits. Subunits NuoA, H, J, K, L, M, N constitute the membrane sector of the complex.

It is found in the cell inner membrane. It carries out the reaction a quinone + NADH + 5 H(+)(in) = a quinol + NAD(+) + 4 H(+)(out). In terms of biological role, NDH-1 shuttles electrons from NADH, via FMN and iron-sulfur (Fe-S) centers, to quinones in the respiratory chain. The immediate electron acceptor for the enzyme in this species is believed to be ubiquinone. Couples the redox reaction to proton translocation (for every two electrons transferred, four hydrogen ions are translocated across the cytoplasmic membrane), and thus conserves the redox energy in a proton gradient. This subunit may bind ubiquinone. The protein is NADH-quinone oxidoreductase subunit H 1 of Geobacter sulfurreducens (strain ATCC 51573 / DSM 12127 / PCA).